Consider the following 333-residue polypeptide: Electron transfer flavoprotein subunit alpha, mitochondrial (333 aa).

The transit peptide at 1-19 (MFRAAAPGQLRRAASLLRF) directs the protein to the mitochondrion. The tract at residues 20-204 (QSTLVIAEHA…GISEWLDQKL (185 aa)) is domain I. Lysine 59 is modified (N6-acetyllysine; alternate). Lysine 59 carries the post-translational modification N6-succinyllysine; alternate. The residue at position 62 (lysine 62) is an N6-acetyllysine. Lysine 69 carries the post-translational modification N6-acetyllysine; alternate. The residue at position 69 (lysine 69) is an N6-succinyllysine; alternate. At lysine 75 the chain carries N6-acetyllysine. At lysine 85 the chain carries N6-acetyllysine; alternate. Lysine 85 carries the N6-succinyllysine; alternate modification. Position 93 is a phosphothreonine (threonine 93). N6-acetyllysine is present on residues lysine 101 and lysine 139. A Phosphoserine modification is found at serine 140. Lysine 158 is subject to N6-acetyllysine; alternate. Position 158 is an N6-succinyllysine; alternate (lysine 158). Lysine 164 bears the N6-acetyllysine mark. Lysine 187 carries the post-translational modification N6-succinyllysine. Lysine 203 is modified (N6-acetyllysine; alternate). An N6-succinyllysine; alternate modification is found at lysine 203. A domain II region spans residues 205 to 333 (TKSDRPELTG…PEMTEILKKK (129 aa)). The residue at position 216 (lysine 216) is an N6-succinyllysine. Arginine 223 lines the FAD pocket. 2 positions are modified to N6-acetyllysine; alternate: lysine 226 and lysine 232. N6-succinyllysine; alternate is present on residues lysine 226 and lysine 232. Residues serine 248, 263 to 266 (VGQT), 281 to 286 (SGAIQH), and asparagine 300 contribute to the FAD site. At lysine 301 the chain carries N6-succinyllysine. Position 318 to 319 (318 to 319 (DL)) interacts with FAD.

This sequence belongs to the ETF alpha-subunit/FixB family. Heterodimer composed of ETFA and ETFB. Identified in a complex that contains ETFA, ETFB and ETFRF1. Interaction with ETFRF1 promotes dissociation of the bound FAD and loss of electron transfer activity. Interacts with TASOR. The cofactor is FAD.

The protein resides in the mitochondrion matrix. Its function is as follows. Heterodimeric electron transfer flavoprotein that accepts electrons from several mitochondrial dehydrogenases, including acyl-CoA dehydrogenases, glutaryl-CoA and sarcosine dehydrogenase. It transfers the electrons to the main mitochondrial respiratory chain via ETF-ubiquinone oxidoreductase (ETF dehydrogenase). Required for normal mitochondrial fatty acid oxidation and normal amino acid metabolism. The protein is Electron transfer flavoprotein subunit alpha, mitochondrial (Etfa) of Rattus norvegicus (Rat).